We begin with the raw amino-acid sequence, 429 residues long: Phosphoribosylamine--glycine ligase (429 aa).

The region spanning 109 to 316 (KDFLARHHIP…LVELCLAACD (208 aa)) is the ATP-grasp domain. 135-196 (LREKGAPIVV…EEFLDGEEAS (62 aa)) serves as a coordination point for ATP. A disordered region spans residues 209 to 231 (MATSQDHKRVGENDTGLNTGGMG). 2 residues coordinate Mg(2+): E286 and N288.

The protein belongs to the GARS family. Mg(2+) serves as cofactor. Requires Mn(2+) as cofactor.

The catalysed reaction is 5-phospho-beta-D-ribosylamine + glycine + ATP = N(1)-(5-phospho-beta-D-ribosyl)glycinamide + ADP + phosphate + H(+). It participates in purine metabolism; IMP biosynthesis via de novo pathway; N(1)-(5-phospho-D-ribosyl)glycinamide from 5-phospho-alpha-D-ribose 1-diphosphate: step 2/2. The sequence is that of Phosphoribosylamine--glycine ligase from Pasteurella multocida (strain Pm70).